A 257-amino-acid polypeptide reads, in one-letter code: Probable endonuclease LCL3 (257 aa).

The chain crosses the membrane as a helical span at residues 39 to 55; it reads VPTAIATTTILAAVQFY. The TNase-like domain occupies 76–234; sequence RSLFGRVTSV…KLKKLGMWGA (159 aa). Residue Arg125 is part of the active site. Residue Asp130 participates in Ca(2+) binding. Residues Glu133 and Arg173 contribute to the active site. Residues 236 to 246 are compositionally biased toward basic and acidic residues; sequence GKFESPRDYKN. Residues 236-257 are disordered; it reads GKFESPRDYKNRHAATSESKLS.

It belongs to the LCL3 family.

It is found in the mitochondrion. Its subcellular location is the membrane. This chain is Probable endonuclease LCL3 (LCL3), found in Pyricularia oryzae (strain 70-15 / ATCC MYA-4617 / FGSC 8958) (Rice blast fungus).